The chain runs to 230 residues: Zein-alpha 19A2 (230 aa).

Positions 1-18 are cleaved as a signal peptide; sequence KIFCFLMLLGLSASAATA.

It belongs to the zein family.

Zeins are major seed storage proteins. In Zea mays (Maize), this protein is Zein-alpha 19A2.